The following is a 509-amino-acid chain: Aldehyde dehydrogenase 1A1 (509 aa).

NAD(+) contacts are provided by residues 175 to 178, 201 to 204, 234 to 235, 254 to 255, and 277 to 279; these read IPWN, KPAE, GP, GS, and ELG. Glu277 (proton acceptor) is an active-site residue. The active-site Nucleophile is the Cys311. NAD(+) is bound by residues 357-361 and 408-410; these read EQFQK and EIF.

It belongs to the aldehyde dehydrogenase family. Homotetramer.

It is found in the cytoplasm. The protein resides in the cytosol. Its subcellular location is the cell projection. The protein localises to the axon. It carries out the reaction an aldehyde + NAD(+) + H2O = a carboxylate + NADH + 2 H(+). The enzyme catalyses all-trans-retinal + NAD(+) + H2O = all-trans-retinoate + NADH + 2 H(+). It catalyses the reaction 9-cis-retinal + NAD(+) + H2O = 9-cis-retinoate + NADH + 2 H(+). The catalysed reaction is 11-cis-retinal + NAD(+) + H2O = 11-cis-retinoate + NADH + 2 H(+). It carries out the reaction 13-cis-retinal + NAD(+) + H2O = 13-cis-retinoate + NADH + 2 H(+). The enzyme catalyses 3-deoxyglucosone + NAD(+) + H2O = 2-dehydro-3-deoxy-D-gluconate + NADH + 2 H(+). It catalyses the reaction (E)-4-hydroxynon-2-enal + NAD(+) + H2O = (E)-4-hydroxynon-2-enoate + NADH + 2 H(+). The catalysed reaction is malonaldehyde + NAD(+) + H2O = 3-oxopropanoate + NADH + 2 H(+). It carries out the reaction hexanal + NAD(+) + H2O = hexanoate + NADH + 2 H(+). The enzyme catalyses propanal + NAD(+) + H2O = propanoate + NADH + 2 H(+). It catalyses the reaction acetaldehyde + NAD(+) + H2O = acetate + NADH + 2 H(+). The catalysed reaction is benzaldehyde + NAD(+) + H2O = benzoate + NADH + 2 H(+). It carries out the reaction 4-aminobutanal + NAD(+) + H2O = 4-aminobutanoate + NADH + 2 H(+). The protein operates within cofactor metabolism; retinol metabolism. In terms of biological role, cytosolic dehydrogenase that catalyzes the irreversible oxidation of a wide range of aldehydes to their corresponding carboxylic acid. Functions downstream of retinol dehydrogenases and catalyzes the oxidation of retinaldehyde into retinoic acid, the second step in the oxidation of retinol/vitamin A into retinoic acid. This pathway is crucial to control the levels of retinol and retinoic acid, two important molecules which excess can be teratogenic and cytotoxic. Also oxidizes aldehydes resulting from lipid peroxidation like (E)-4-hydroxynon-2-enal/HNE, malonaldehyde and hexanal that form protein adducts and are highly cytotoxic. By participating for instance to the clearance of (E)-4-hydroxynon-2-enal/HNE in the lens epithelium prevents the formation of HNE-protein adducts and lens opacification. Also functions downstream of fructosamine-3-kinase in the fructosamine degradation pathway by catalyzing the oxidation of 3-deoxyglucosone, the carbohydrate product of fructosamine 3-phosphate decomposition, which is itself a potent glycating agent that may react with lysine and arginine side-chains of proteins. Also has an aminobutyraldehyde dehydrogenase activity and is probably part of an alternative pathway for the biosynthesis of GABA/4-aminobutanoate in midbrain, thereby playing a role in GABAergic synaptic transmission. The sequence is that of Aldehyde dehydrogenase 1A1 from Gallus gallus (Chicken).